Consider the following 496-residue polypeptide: Probable cytosol aminopeptidase (496 aa).

Mn(2+) is bound by residues lysine 262 and aspartate 267. The active site involves lysine 274. 3 residues coordinate Mn(2+): aspartate 285, aspartate 344, and glutamate 346. Arginine 348 is a catalytic residue.

This sequence belongs to the peptidase M17 family. It depends on Mn(2+) as a cofactor.

Its subcellular location is the cytoplasm. It catalyses the reaction Release of an N-terminal amino acid, Xaa-|-Yaa-, in which Xaa is preferably Leu, but may be other amino acids including Pro although not Arg or Lys, and Yaa may be Pro. Amino acid amides and methyl esters are also readily hydrolyzed, but rates on arylamides are exceedingly low.. The enzyme catalyses Release of an N-terminal amino acid, preferentially leucine, but not glutamic or aspartic acids.. Its function is as follows. Presumably involved in the processing and regular turnover of intracellular proteins. Catalyzes the removal of unsubstituted N-terminal amino acids from various peptides. This chain is Probable cytosol aminopeptidase, found in Rhizobium etli (strain CIAT 652).